A 241-amino-acid chain; its full sequence is Uridylate kinase (241 aa).

An ATP-binding site is contributed by 15-18; the sequence is KLSG. Residues 23–28 are involved in allosteric activation by GTP; sequence GTEGFG. A UMP-binding site is contributed by Gly-57. ATP contacts are provided by Gly-58 and Arg-62. UMP contacts are provided by residues Asp-77 and 138-145; that span reads TGNPFFTT. 3 residues coordinate ATP: Thr-165, Tyr-171, and Asp-174.

The protein belongs to the UMP kinase family. Homohexamer.

It localises to the cytoplasm. It catalyses the reaction UMP + ATP = UDP + ADP. Its pathway is pyrimidine metabolism; CTP biosynthesis via de novo pathway; UDP from UMP (UMPK route): step 1/1. Its activity is regulated as follows. Allosterically activated by GTP. Inhibited by UTP. Its function is as follows. Catalyzes the reversible phosphorylation of UMP to UDP. This Pectobacterium atrosepticum (strain SCRI 1043 / ATCC BAA-672) (Erwinia carotovora subsp. atroseptica) protein is Uridylate kinase.